Consider the following 162-residue polypeptide: Ribosome maturation factor RimP (162 aa).

The protein belongs to the RimP family.

It localises to the cytoplasm. Required for maturation of 30S ribosomal subunits. This Ralstonia pickettii (strain 12J) protein is Ribosome maturation factor RimP.